We begin with the raw amino-acid sequence, 194 residues long: Orotate phosphoribosyltransferase (194 aa).

116-124 is a 5-phospho-alpha-D-ribose 1-diphosphate binding site; that stretch reads EDIVTTGLS. Positions 120 and 148 each coordinate orotate.

This sequence belongs to the purine/pyrimidine phosphoribosyltransferase family. PyrE subfamily. As to quaternary structure, homodimer. Mg(2+) is required as a cofactor.

It carries out the reaction orotidine 5'-phosphate + diphosphate = orotate + 5-phospho-alpha-D-ribose 1-diphosphate. The protein operates within pyrimidine metabolism; UMP biosynthesis via de novo pathway; UMP from orotate: step 1/2. In terms of biological role, catalyzes the transfer of a ribosyl phosphate group from 5-phosphoribose 1-diphosphate to orotate, leading to the formation of orotidine monophosphate (OMP). The chain is Orotate phosphoribosyltransferase from Caulobacter vibrioides (strain ATCC 19089 / CIP 103742 / CB 15) (Caulobacter crescentus).